Reading from the N-terminus, the 1007-residue chain is Serine/threonine-protein kinase atg1 (1007 aa).

Positions 30 to 336 (YTRLSEIGRG…FDVYFAHKVL (307 aa)) constitute a Protein kinase domain. Residues 36-44 (IGRGSFAVV) and K59 contribute to the ATP site. Residue D174 is the Proton acceptor of the active site. Disordered stretches follow at residues 343–489 (LVAD…KEHA), 524–586 (GGQA…PTSA), 795–817 (RLPS…GSGT), and 878–900 (SRPG…DGGQ). Over residues 373–387 (MKRENALSGGVRDEP) the composition is skewed to basic and acidic residues. Residues 396–410 (AMTQSPRPETPSTPM) are compositionally biased toward polar residues. A compositionally biased stretch (basic and acidic residues) spans 477-489 (KPVEKAKDEKEHA). Positions 534–555 (SGAAPGTPPAGGSSPHASPSKA) are enriched in low complexity. The span at 563-579 (SRADSAHVRQNSYDRRY) shows a compositional bias: basic and acidic residues. Residues 805-817 (SNLSVGSSLGSGT) are compositionally biased toward low complexity. A compositionally biased stretch (basic and acidic residues) spans 887 to 896 (DRADARRDNE).

It belongs to the protein kinase superfamily. Ser/Thr protein kinase family. APG1/unc-51/ULK1 subfamily. Homodimer. Forms a ternary complex with ATG13 and ATG17.

The protein localises to the cytoplasm. It localises to the preautophagosomal structure membrane. It carries out the reaction L-seryl-[protein] + ATP = O-phospho-L-seryl-[protein] + ADP + H(+). The enzyme catalyses L-threonyl-[protein] + ATP = O-phospho-L-threonyl-[protein] + ADP + H(+). Functionally, serine/threonine protein kinase involved in the cytoplasm to vacuole transport (Cvt) and found to be essential in autophagy, where it is required for the formation of autophagosomes. Involved in the clearance of protein aggregates which cannot be efficiently cleared by the proteasome. Required for selective autophagic degradation of the nucleus (nucleophagy) as well as for mitophagy which contributes to regulate mitochondrial quantity and quality by eliminating the mitochondria to a basal level to fulfill cellular energy requirements and preventing excess ROS production. Also involved in endoplasmic reticulum-specific autophagic process, in selective removal of ER-associated degradation (ERAD) substrates. Plays a key role in ATG9 and ATG23 cycling through the pre-autophagosomal structure and is necessary to promote ATG18 binding to ATG9 through phosphorylation of ATG9. Catalyzes phosphorylation of ATG4, decreasing the interaction between ATG4 and ATG8 and impairing deconjugation of PE-conjugated forms of ATG8. The polypeptide is Serine/threonine-protein kinase atg1 (Aspergillus niger (strain ATCC MYA-4892 / CBS 513.88 / FGSC A1513)).